The following is a 369-amino-acid chain: Peptide chain release factor 2 (369 aa).

Gln-249 is modified (N5-methylglutamine).

The protein belongs to the prokaryotic/mitochondrial release factor family. Post-translationally, methylated by PrmC. Methylation increases the termination efficiency of RF2.

The protein localises to the cytoplasm. In terms of biological role, peptide chain release factor 2 directs the termination of translation in response to the peptide chain termination codons UGA and UAA. The polypeptide is Peptide chain release factor 2 (Corynebacterium diphtheriae (strain ATCC 700971 / NCTC 13129 / Biotype gravis)).